Here is a 616-residue protein sequence, read N- to C-terminus: 2-isopropylmalate synthase (616 aa).

A disordered region spans residues 1-34 (MSPNDAFISAPAKIETPVGPRNEGQPAWNKQRGS). A Pyruvate carboxyltransferase domain is found at 67 to 341 (PQWCAVDLRD…DPQLDFTDIR (275 aa)). Residues Asp76, His280, His282, and Asn316 each contribute to the Mg(2+) site. The regulatory domain stretch occupies residues 490-616 (RTAPVEQIAL…NHEAVLAGGV (127 aa)).

This sequence belongs to the alpha-IPM synthase/homocitrate synthase family. LeuA type 2 subfamily. Homodimer. Mg(2+) serves as cofactor.

The protein localises to the cytoplasm. It catalyses the reaction 3-methyl-2-oxobutanoate + acetyl-CoA + H2O = (2S)-2-isopropylmalate + CoA + H(+). Its pathway is amino-acid biosynthesis; L-leucine biosynthesis; L-leucine from 3-methyl-2-oxobutanoate: step 1/4. Catalyzes the condensation of the acetyl group of acetyl-CoA with 3-methyl-2-oxobutanoate (2-ketoisovalerate) to form 3-carboxy-3-hydroxy-4-methylpentanoate (2-isopropylmalate). In Corynebacterium glutamicum (strain R), this protein is 2-isopropylmalate synthase.